The sequence spans 419 residues: DNA ligase (419 aa).

Residues 1 to 120 are NTD; it reads MLNHFPGHCS…ARQKRGAHTN (120 aa). Residues 121–317 are AD domain; sequence TGMIPPMLVK…NYHSAHLAKL (197 aa). The active-site N6-AMP-lysine intermediate is Lys-151. The OB domain stretch occupies residues 318-419; the sequence is KPLLDAEFIL…REPINVLEII (102 aa).

The protein belongs to the ATP-dependent DNA ligase family.

It is found in the virion. The enzyme catalyses ATP + (deoxyribonucleotide)n-3'-hydroxyl + 5'-phospho-(deoxyribonucleotide)m = (deoxyribonucleotide)n+m + AMP + diphosphate.. Functionally, very low-fidelity DNA ligase that seals nicks in double-stranded DNA during DNA repair. Together with the viral repair DNA polymerase X, fills the single nucleotide gaps generated by the AP endonuclease. It is not essential for viral replication and recombination. Displays a very low adenylation activity towards DNA with 3'-dideoxy- or 3'-amino-terminated nicks compared to regular nick DNA. The polypeptide is DNA ligase (Ornithodoros (relapsing fever ticks)).